Here is a 423-residue protein sequence, read N- to C-terminus: Adenylosuccinate synthetase (423 aa).

GTP-binding positions include 11–17 and 39–41; these read GDEGKGK and GHT. Residue Asp-12 is the Proton acceptor of the active site. Positions 12 and 39 each coordinate Mg(2+). Residues 12–15, 37–40, Thr-129, Arg-143, Asn-219, Thr-234, and Arg-298 each bind IMP; these read DEGK and NAGH. His-40 acts as the Proton donor in catalysis. 294–300 lines the substrate pocket; that stretch reads VTTGRRR. GTP contacts are provided by residues Arg-300, 326–328, and 411–413; these read KLD and GTG.

Belongs to the adenylosuccinate synthetase family. In terms of assembly, homodimer. It depends on Mg(2+) as a cofactor.

It localises to the cytoplasm. It catalyses the reaction IMP + L-aspartate + GTP = N(6)-(1,2-dicarboxyethyl)-AMP + GDP + phosphate + 2 H(+). The protein operates within purine metabolism; AMP biosynthesis via de novo pathway; AMP from IMP: step 1/2. Functionally, plays an important role in the de novo pathway and in the salvage pathway of purine nucleotide biosynthesis. Catalyzes the first committed step in the biosynthesis of AMP from IMP. The protein is Adenylosuccinate synthetase of Penicillium rubens (strain ATCC 28089 / DSM 1075 / NRRL 1951 / Wisconsin 54-1255) (Penicillium chrysogenum).